The chain runs to 400 residues: Keratin, type I cytoskeletal 19 (400 aa).

The tract at residues 1–79 (MTSYSYRQSS…TASDGLLAGN (79 aa)) is head. At Arg-7 the chain carries Omega-N-methylarginine. Ser-14 and Ser-22 each carry phosphoserine. At Arg-24 the chain carries Asymmetric dimethylarginine; alternate. The residue at position 24 (Arg-24) is an Omega-N-methylarginine; alternate. Arg-32 carries the post-translational modification Omega-N-methylarginine. Ser-35 and Ser-40 each carry phosphoserine. 2 positions are modified to omega-N-methylarginine: Arg-43 and Arg-51. 2 positions are modified to phosphoserine: Ser-57 and Ser-72. Residues 80–115 (EKLTMQNLNDRLASYLDKVRALEAANGELEVKIRDW) are coil 1A. An IF rod domain is found at 80-391 (EKLTMQNLND…SLLEGQEDHY (312 aa)). Residues 116–133 (YQKQGPGPSRDYSHYYTT) are linker 1. The coil 1B stretch occupies residues 134–225 (IQDLRDKILG…KNHEEEISTL (92 aa)). The segment at 226–248 (RGQVGGQVSVEVDSAPGTDLAKI) is linker 12. The interval 244–390 (DLAKILSDMR…RSLLEGQEDH (147 aa)) is necessary for interaction with PNN. A coil 2 region spans residues 249–387 (LSDMRSQYEV…ATYRSLLEGQ (139 aa)). Thr-323 carries the phosphothreonine modification. The tract at residues 388 to 400 (EDHYNNLSASKVL) is rod-like helical tail. Tyr-391 carries the phosphotyrosine modification. 2 positions are modified to phosphoserine: Ser-395 and Ser-397.

This sequence belongs to the intermediate filament family. Heterotetramer of two type I and two type II keratins. Interacts with PNN and the actin-binding domain of DMD. Interacts with HCV core protein. As to quaternary structure, (Microbial infection) Interacts with hepatitis C virus/HCV core protein. As to expression, expressed in a defined zone of basal keratinocytes in the deep outer root sheath of hair follicles. Also observed in sweat gland and mammary gland ductal and secretory cells, bile ducts, gastrointestinal tract, bladder urothelium, oral epithelia, esophagus, ectocervical epithelium (at protein level). Expressed in epidermal basal cells, in nipple epidermis and a defined region of the hair follicle. Also seen in a subset of vascular wall cells in both the veins and artery of human umbilical cord, and in umbilical cord vascular smooth muscle. Observed in muscle fibers accumulating in the costameres of myoplasm at the sarcolemma in structures that contain dystrophin and spectrin.

Involved in the organization of myofibers. Together with KRT8, helps to link the contractile apparatus to dystrophin at the costameres of striated muscle. This is Keratin, type I cytoskeletal 19 (KRT19) from Homo sapiens (Human).